The sequence spans 179 residues: Large ribosomal subunit protein uL5 (179 aa).

Belongs to the universal ribosomal protein uL5 family. As to quaternary structure, part of the 50S ribosomal subunit; part of the 5S rRNA/L5/L18/L25 subcomplex. Contacts the 5S rRNA and the P site tRNA. Forms a bridge to the 30S subunit in the 70S ribosome.

Its function is as follows. This is one of the proteins that bind and probably mediate the attachment of the 5S RNA into the large ribosomal subunit, where it forms part of the central protuberance. In the 70S ribosome it contacts protein S13 of the 30S subunit (bridge B1b), connecting the 2 subunits; this bridge is implicated in subunit movement. Contacts the P site tRNA; the 5S rRNA and some of its associated proteins might help stabilize positioning of ribosome-bound tRNAs. In Sodalis glossinidius (strain morsitans), this protein is Large ribosomal subunit protein uL5.